Reading from the N-terminus, the 1076-residue chain is Isoleucine--tRNA ligase (1076 aa).

The short motif at 47-57 (PYTTGQIHLGT) is the 'HIGH' region element. The 'KMSKS' region signature appears at 591-595 (KMSKS). Residue Lys-594 participates in ATP binding.

It belongs to the class-I aminoacyl-tRNA synthetase family. IleS type 2 subfamily. As to quaternary structure, monomer. The cofactor is Zn(2+).

It is found in the cytoplasm. The catalysed reaction is tRNA(Ile) + L-isoleucine + ATP = L-isoleucyl-tRNA(Ile) + AMP + diphosphate. Functionally, catalyzes the attachment of isoleucine to tRNA(Ile). As IleRS can inadvertently accommodate and process structurally similar amino acids such as valine, to avoid such errors it has two additional distinct tRNA(Ile)-dependent editing activities. One activity is designated as 'pretransfer' editing and involves the hydrolysis of activated Val-AMP. The other activity is designated 'posttransfer' editing and involves deacylation of mischarged Val-tRNA(Ile). This Methanoregula boonei (strain DSM 21154 / JCM 14090 / 6A8) protein is Isoleucine--tRNA ligase.